Reading from the N-terminus, the 197-residue chain is Auxin-responsive protein IAA31 (197 aa).

2 disordered regions span residues 1-43 (MENL…DQAK) and 66-90 (SCLQ…ETQQ). The EAR-like (transcriptional repression) signature appears at 9-13 (LRLGL). The PB1 domain occupies 99–186 (GLFVKVSMDG…TCKRLRIMKG (88 aa)).

This sequence belongs to the Aux/IAA family. As to quaternary structure, homodimers and heterodimers. Highly expressed in etiolated seedlings. Expressed in roots.

The protein resides in the nucleus. Its function is as follows. Aux/IAA proteins are short-lived transcriptional factors that function as repressors of early auxin response genes at low auxin concentrations. This Oryza sativa subsp. japonica (Rice) protein is Auxin-responsive protein IAA31 (IAA31).